A 310-amino-acid chain; its full sequence is Basic salivary proline-rich protein 4 (310 aa).

The N-terminal stretch at 1–16 is a signal peptide; it reads MLLILLSVALLALSSA. The interval 14-310 is disordered; the sequence is SSAESSSEDV…RPAQGQQPPQ (297 aa). 9 consecutive repeat copies span residues 35–55, 56–76, 77–97, 98–118, 119–139, 140–160, 161–181, 182–202, and 203–223. The segment at 35 to 234 is 9.5 X 21 AA tandem repeats of K-P-[EQ]-[GR]-[PR]-[PR]-P-Q-G-G-N-Q-[PS]-[QH]-[RG]-[PT]-P-P-[PH]-P-G; that stretch reads KPEGRRPQGG…PEGPPPQEGN (200 aa). Positions 48 to 63 are enriched in pro residues; the sequence is QRPPPPPGKPQGPPPQ. N-linked (GlcNAc...) asparagine glycosylation is found at N66, N87, and N108. Positions 133–147 are enriched in pro residues; that stretch reads GPPPTPGKPEGPPPQ. Residues N150, N171, and N192 are each glycosylated (N-linked (GlcNAc...) asparagine). Positions 196-210 are enriched in pro residues; sequence RPPPPPGKPERPPPQ. Residue N213 is glycosylated (N-linked (GlcNAc...) asparagine). Residues 217–231 show a composition bias toward pro residues; it reads GPPPHPGKPEGPPPQ. Residues 224–234 form a 10; truncated repeat; sequence KPEGPPPQEGN. The N-linked (GlcNAc...) asparagine glycan is linked to N234. The span at 258–310 shows a compositional bias: pro residues; sequence QGPPPPGKPQGPPPAGGNPQQPQAPPAGKPQGPPPPPQGGRPPRPAQGQQPPQ.

N-glycosylated. Post-translationally, proteolytically cleaved at the tripeptide Xaa-Pro-Gln, where Xaa in the P(3) position is mostly lysine. The endoprotease may be of microbial origin. Pyroglutamate formation found on at least Gln-46, Gln-48, Gln-67, Gln-88; Gln-90; Gln-193; Gln-288 Gln-214 and Gln-295, preferentially in diabetic, and head and neck cancer patients.

The protein resides in the secreted. The protein is Basic salivary proline-rich protein 4 (PRB4) of Homo sapiens (Human).